Here is a 588-residue protein sequence, read N- to C-terminus: Aspartate--tRNA ligase (588 aa).

E174 provides a ligand contact to L-aspartate. An aspartate region spans residues 198-201; it reads QLFK. R220 lines the L-aspartate pocket. ATP contacts are provided by residues 220–222 and Q229; that span reads RDE. Position 448 (H448) interacts with L-aspartate. E482 serves as a coordination point for ATP. L-aspartate is bound at residue R489. Position 534–537 (534–537) interacts with ATP; that stretch reads GLDR.

It belongs to the class-II aminoacyl-tRNA synthetase family. Type 1 subfamily. Homodimer.

Its subcellular location is the cytoplasm. It catalyses the reaction tRNA(Asp) + L-aspartate + ATP = L-aspartyl-tRNA(Asp) + AMP + diphosphate. In terms of biological role, catalyzes the attachment of L-aspartate to tRNA(Asp) in a two-step reaction: L-aspartate is first activated by ATP to form Asp-AMP and then transferred to the acceptor end of tRNA(Asp). This chain is Aspartate--tRNA ligase, found in Exiguobacterium sibiricum (strain DSM 17290 / CCUG 55495 / CIP 109462 / JCM 13490 / 255-15).